The chain runs to 309 residues: Carbamate kinase 3 (309 aa).

Belongs to the carbamate kinase family.

The protein resides in the cytoplasm. The catalysed reaction is hydrogencarbonate + NH4(+) + ATP = carbamoyl phosphate + ADP + H2O + H(+). Its pathway is metabolic intermediate metabolism; carbamoyl phosphate degradation; CO(2) and NH(3) from carbamoyl phosphate: step 1/1. The protein is Carbamate kinase 3 (arcC3) of Staphylococcus aureus (strain USA300).